The chain runs to 346 residues: Aldose 1-epimerase (346 aa).

Arginine 79 contacts substrate. Histidine 175 acts as the Proton donor in catalysis. Residue aspartate 245 participates in substrate binding. The active-site Proton acceptor is glutamate 309.

Belongs to the aldose epimerase family.

Its subcellular location is the cytoplasm. It carries out the reaction alpha-D-glucose = beta-D-glucose. It functions in the pathway carbohydrate metabolism; hexose metabolism. Mutarotase converts alpha-aldose to the beta-anomer. It is active on D-glucose, L-arabinose, D-xylose, D-galactose, maltose and lactose. This is Aldose 1-epimerase (galM) from Escherichia coli (strain K12).